A 92-amino-acid polypeptide reads, in one-letter code: Large ribosomal subunit protein bL27 (92 aa).

Residues 1-9 (MLKLNLQFF) constitute a propeptide that is removed on maturation. The interval 14–34 (GVGSTKNGRDSQSKRLGAKRA) is disordered.

The protein belongs to the bacterial ribosomal protein bL27 family. In terms of processing, the N-terminus is cleaved by ribosomal processing cysteine protease Prp.

The polypeptide is Large ribosomal subunit protein bL27 (Exiguobacterium sibiricum (strain DSM 17290 / CCUG 55495 / CIP 109462 / JCM 13490 / 255-15)).